A 572-amino-acid polypeptide reads, in one-letter code: Proline--tRNA ligase (572 aa).

Belongs to the class-II aminoacyl-tRNA synthetase family. ProS type 1 subfamily. In terms of assembly, homodimer.

It is found in the cytoplasm. It catalyses the reaction tRNA(Pro) + L-proline + ATP = L-prolyl-tRNA(Pro) + AMP + diphosphate. Its function is as follows. Catalyzes the attachment of proline to tRNA(Pro) in a two-step reaction: proline is first activated by ATP to form Pro-AMP and then transferred to the acceptor end of tRNA(Pro). As ProRS can inadvertently accommodate and process non-cognate amino acids such as alanine and cysteine, to avoid such errors it has two additional distinct editing activities against alanine. One activity is designated as 'pretransfer' editing and involves the tRNA(Pro)-independent hydrolysis of activated Ala-AMP. The other activity is designated 'posttransfer' editing and involves deacylation of mischarged Ala-tRNA(Pro). The misacylated Cys-tRNA(Pro) is not edited by ProRS. This is Proline--tRNA ligase from Caldicellulosiruptor bescii (strain ATCC BAA-1888 / DSM 6725 / KCTC 15123 / Z-1320) (Anaerocellum thermophilum).